The primary structure comprises 372 residues: uncharacterized protein (372 aa).

The tract at residues 49–72 is disordered; the sequence is FSHKGGGKGGGSGAGSNDGGCSGE. Residues 55 to 70 show a composition bias toward gly residues; that stretch reads GKGGGSGAGSNDGGCS.

This is an uncharacterized protein from Halorubrum lacusprofundi (strain ATCC 49239 / DSM 5036 / JCM 8891 / ACAM 34).